Here is a 100-residue protein sequence, read N- to C-terminus: Enhancer of yellow 2 transcription factor (100 aa).

Belongs to the ENY2 family. In terms of assembly, component of the nuclear pore complex (NPC)-associated AMEX complex (anchoring and mRNA export complex), composed of at least e(y)2 and xmas-2. Component of the SAGA transcription coactivator-HAT complexes, at least composed of Ada2b, e(y)2, Pcaf/Gcn5, Taf10 and Nipped-A/Trrap. Within the SAGA complex, e(y)2, Sgf11, and not/nonstop form an additional subcomplex of SAGA called the DUB module (deubiquitination module). Component of the THO complex, composed of at least e(y)2, HPR1, THO2, THOC5, THOC6 and THOC7. Interacts with e(y)1. Interacts with su(Hw) (via zinc fingers). Interacts with xmas-2; required for localization to the nuclear periphery. Interacts with the nuclear pore complex (NPC).

It localises to the nucleus. It is found in the nucleoplasm. Its subcellular location is the cytoplasm. Its function is as follows. Involved in mRNA export coupled transcription activation by association with both the AMEX and the SAGA complexes. The SAGA complex is a multiprotein complex that activates transcription by remodeling chromatin and mediating histone acetylation and deubiquitination. Within the SAGA complex, participates in a subcomplex that specifically deubiquitinates histone H2B. The SAGA complex is recruited to specific gene promoters by activators, where it is required for transcription. Required for nuclear receptor-mediated transactivation. Involved in transcription elongation by recruiting the THO complex onto nascent mRNA. The AMEX complex functions in docking export-competent ribonucleoprotein particles (mRNPs) to the nuclear entrance of the nuclear pore complex (nuclear basket). AMEX participates in mRNA export and accurate chromatin positioning in the nucleus by tethering genes to the nuclear periphery. The sequence is that of Enhancer of yellow 2 transcription factor from Drosophila pseudoobscura pseudoobscura (Fruit fly).